Reading from the N-terminus, the 243-residue chain is tRNA (guanine-N(1)-)-methyltransferase (243 aa).

S-adenosyl-L-methionine contacts are provided by residues glycine 111 and isoleucine 131 to leucine 136.

This sequence belongs to the RNA methyltransferase TrmD family. As to quaternary structure, homodimer.

Its subcellular location is the cytoplasm. The enzyme catalyses guanosine(37) in tRNA + S-adenosyl-L-methionine = N(1)-methylguanosine(37) in tRNA + S-adenosyl-L-homocysteine + H(+). Specifically methylates guanosine-37 in various tRNAs. In Brevibacillus brevis (strain 47 / JCM 6285 / NBRC 100599), this protein is tRNA (guanine-N(1)-)-methyltransferase.